Consider the following 288-residue polypeptide: Beta-lactamase PSE-1 (288 aa).

A signal peptide spans 1–17; the sequence is MKFLLAFSLLIPSVVFA. The active-site Acyl-ester intermediate is the serine 65. A disulfide bond links cysteine 72 and cysteine 118. 229 to 231 provides a ligand contact to substrate; the sequence is RSG.

Belongs to the class-A beta-lactamase family. Monomer.

It catalyses the reaction a beta-lactam + H2O = a substituted beta-amino acid. Its activity is regulated as follows. Inhibited by p-chloromercuribenzoate but not by cloxacillin. Its function is as follows. Hydrolyzes penicillin, ampicillin and carbenicillin but not other antibiotics including oxacillin, methicillin and cloxacillin. The protein is Beta-lactamase PSE-1 of Pseudomonas aeruginosa.